Here is a 635-residue protein sequence, read N- to C-terminus: Threonine--tRNA ligase (635 aa).

The region spanning 1-61 (MINISFPDGS…DNDCRLRILT (61 aa)) is the TGS domain. Positions 242-533 (DHRKLGKELD…LIEEYAGRFP (292 aa)) are catalytic. Residues C333, H384, and H510 each coordinate Zn(2+).

Belongs to the class-II aminoacyl-tRNA synthetase family. As to quaternary structure, homodimer. It depends on Zn(2+) as a cofactor.

Its subcellular location is the cytoplasm. It carries out the reaction tRNA(Thr) + L-threonine + ATP = L-threonyl-tRNA(Thr) + AMP + diphosphate + H(+). Its function is as follows. Catalyzes the attachment of threonine to tRNA(Thr) in a two-step reaction: L-threonine is first activated by ATP to form Thr-AMP and then transferred to the acceptor end of tRNA(Thr). Also edits incorrectly charged L-seryl-tRNA(Thr). This Rickettsia bellii (strain RML369-C) protein is Threonine--tRNA ligase.